The chain runs to 206 residues: MASEVVIRRATAADHGDLCRVCLLTGDSGRDASSREDDPTLLGMIYAVPYQVGAPDFAFVLEDAEGVCGYLLGAPDTLSFQHFLEKEWLPPLRAGLTDPGPDPAAWQGSDWARDAIHRPPALPPIDLAAYPAHGHIDLLPRAQGRGVGSRAMDHLEAALAAAGAPGMHLQVSPENPRALGFYEHRGFRELCRSEDEVVVGRRLLDE.

Positions Val-5 to Asp-205 constitute an N-acetyltransferase domain. Acetyl-CoA-binding positions include His-135 to Leu-138, Gly-144 to Gly-148, Asn-175 to Arg-177, and His-184.

It belongs to the acetyltransferase family. In terms of assembly, monomer.

In terms of biological role, binds acetyl-CoA, but not butyryl-CoA or decanoyl-CoA. May have acetyltransferase activity. In Oceanicola granulosus (strain ATCC BAA-861 / DSM 15982 / KCTC 12143 / HTCC2516), this protein is Putative acetyltransferase OgpAT.